The chain runs to 128 residues: Fluoride-specific ion channel FluC (128 aa).

A run of 4 helical transmembrane segments spans residues 7–27 (LAIGIGGFIGAILRAYTAGLV), 37–57 (FGTLSVNLIGSLLLGMFIGAI), 73–93 (TGMMGAFTTFSTFAVESFFLF), and 96–116 (ALYIQALSYILLNVIGCIILA). The Na(+) site is built by Gly77 and Thr80.

It belongs to the fluoride channel Fluc/FEX (TC 1.A.43) family.

It is found in the cell inner membrane. The enzyme catalyses fluoride(in) = fluoride(out). Na(+) is not transported, but it plays an essential structural role and its presence is essential for fluoride channel function. Functionally, fluoride-specific ion channel. Important for reducing fluoride concentration in the cell, thus reducing its toxicity. The chain is Fluoride-specific ion channel FluC from Nautilia profundicola (strain ATCC BAA-1463 / DSM 18972 / AmH).